Reading from the N-terminus, the 106-residue chain is Iron-sulfur cluster assembly protein CyaY (106 aa).

This sequence belongs to the frataxin family.

Functionally, involved in iron-sulfur (Fe-S) cluster assembly. May act as a regulator of Fe-S biogenesis. This chain is Iron-sulfur cluster assembly protein CyaY, found in Salmonella newport (strain SL254).